Consider the following 211-residue polypeptide: Large ribosomal subunit protein uL4 (211 aa).

A disordered region spans residues 63–94 (RFGRQKGGGTARHGARSAPQFVGGGKAHGPRV).

The protein belongs to the universal ribosomal protein uL4 family. As to quaternary structure, part of the 50S ribosomal subunit.

Its function is as follows. One of the primary rRNA binding proteins, this protein initially binds near the 5'-end of the 23S rRNA. It is important during the early stages of 50S assembly. It makes multiple contacts with different domains of the 23S rRNA in the assembled 50S subunit and ribosome. Forms part of the polypeptide exit tunnel. The polypeptide is Large ribosomal subunit protein uL4 (Maricaulis maris (strain MCS10) (Caulobacter maris)).